A 547-amino-acid polypeptide reads, in one-letter code: Chaperonin GroEL 1 (547 aa).

ATP-binding positions include 30-33, Lys51, 87-91, Gly415, and Asp494; these read TLGP and DGTTT. Residues 524 to 547 are disordered; sequence PKGKAKGGGAGAGMPDYGGDDMDY.

This sequence belongs to the chaperonin (HSP60) family. Forms a cylinder of 14 subunits composed of two heptameric rings stacked back-to-back. Interacts with the co-chaperonin GroES.

The protein resides in the cytoplasm. It catalyses the reaction ATP + H2O + a folded polypeptide = ADP + phosphate + an unfolded polypeptide.. Its function is as follows. Together with its co-chaperonin GroES, plays an essential role in assisting protein folding. The GroEL-GroES system forms a nano-cage that allows encapsulation of the non-native substrate proteins and provides a physical environment optimized to promote and accelerate protein folding. This Myxococcus xanthus (strain DK1622) protein is Chaperonin GroEL 1.